The sequence spans 542 residues: CTP synthase (542 aa).

The segment at 1 to 265 is amidoligase domain; the sequence is MTRYIFVTGG…DDFVVERFGL (265 aa). Residue Ser13 coordinates CTP. Ser13 lines the UTP pocket. ATP-binding positions include 14–19 and Asp71; that span reads SLGKGI. The Mg(2+) site is built by Asp71 and Glu139. CTP-binding positions include 146 to 148, 186 to 191, and Lys222; these read DIE and KTKPTQ. UTP-binding positions include 186-191 and Lys222; that span reads KTKPTQ. The Glutamine amidotransferase type-1 domain occupies 290-541; it reads TIAMVGKYME…VKAALAQKNK (252 aa). Gly351 provides a ligand contact to L-glutamine. Cys378 functions as the Nucleophile; for glutamine hydrolysis in the catalytic mechanism. Residues 379-382, Glu402, and Arg469 each bind L-glutamine; that span reads LGMQ. Active-site residues include His514 and Glu516.

This sequence belongs to the CTP synthase family. In terms of assembly, homotetramer.

It carries out the reaction UTP + L-glutamine + ATP + H2O = CTP + L-glutamate + ADP + phosphate + 2 H(+). It catalyses the reaction L-glutamine + H2O = L-glutamate + NH4(+). The catalysed reaction is UTP + NH4(+) + ATP = CTP + ADP + phosphate + 2 H(+). It functions in the pathway pyrimidine metabolism; CTP biosynthesis via de novo pathway; CTP from UDP: step 2/2. With respect to regulation, allosterically activated by GTP, when glutamine is the substrate; GTP has no effect on the reaction when ammonia is the substrate. The allosteric effector GTP functions by stabilizing the protein conformation that binds the tetrahedral intermediate(s) formed during glutamine hydrolysis. Inhibited by the product CTP, via allosteric rather than competitive inhibition. Its function is as follows. Catalyzes the ATP-dependent amination of UTP to CTP with either L-glutamine or ammonia as the source of nitrogen. Regulates intracellular CTP levels through interactions with the four ribonucleotide triphosphates. The chain is CTP synthase from Pseudomonas putida (strain W619).